A 233-amino-acid chain; its full sequence is tRNA (guanine-N(7)-)-methyltransferase (233 aa).

The disordered stretch occupies residues 1–36 (MSEFDPNPPRRNFYGRRHGKTLRQSQKGYLSEDLGS). Residues E68, E93, D120, and D142 each coordinate S-adenosyl-L-methionine. The active site involves D142. Substrate-binding positions include K146, D178, and 211–214 (TRYE).

This sequence belongs to the class I-like SAM-binding methyltransferase superfamily. TrmB family.

It catalyses the reaction guanosine(46) in tRNA + S-adenosyl-L-methionine = N(7)-methylguanosine(46) in tRNA + S-adenosyl-L-homocysteine. It functions in the pathway tRNA modification; N(7)-methylguanine-tRNA biosynthesis. In terms of biological role, catalyzes the formation of N(7)-methylguanine at position 46 (m7G46) in tRNA. This Paracoccus denitrificans (strain Pd 1222) protein is tRNA (guanine-N(7)-)-methyltransferase.